Here is a 322-residue protein sequence, read N- to C-terminus: Pantothenate kinase (322 aa).

100-107 (GSVAVGKS) serves as a coordination point for ATP.

The protein belongs to the prokaryotic pantothenate kinase family.

Its subcellular location is the cytoplasm. The catalysed reaction is (R)-pantothenate + ATP = (R)-4'-phosphopantothenate + ADP + H(+). It participates in cofactor biosynthesis; coenzyme A biosynthesis; CoA from (R)-pantothenate: step 1/5. The chain is Pantothenate kinase from Agrobacterium fabrum (strain C58 / ATCC 33970) (Agrobacterium tumefaciens (strain C58)).